A 552-amino-acid chain; its full sequence is 5'-AMP-activated protein kinase catalytic subunit alpha-2 (552 aa).

Positions 16–268 constitute a Protein kinase domain; the sequence is YVLGDTLGVG…IKDIREHEWF (253 aa). Residues 22–30 and Lys-45 each bind ATP; that span reads LGVGTFGKV. Residue Asp-139 is the Proton acceptor of the active site. A Phosphothreonine; by LKB1 and CaMKK2 modification is found at Thr-172. Thr-258 bears the Phosphothreonine mark. The tract at residues 291–376 is AIS; the sequence is EAVKEVCEKF…PERMPPLIAD (86 aa). A Phosphoserine modification is found at Ser-377. Positions 478–520 are disordered; that stretch reads EQRSGSSTPQRSCSAAGLHRPRSSVDSSTAENHSLSGSLTGSL. Polar residues predominate over residues 480 to 490; it reads RSGSSTPQRSC. Phosphoserine is present on Ser-491. Residues 501–510 show a composition bias toward polar residues; it reads SVDSSTAENH. Over residues 511-520 the composition is skewed to low complexity; sequence SLSGSLTGSL.

This sequence belongs to the protein kinase superfamily. CAMK Ser/Thr protein kinase family. SNF1 subfamily. AMPK is a heterotrimer of an alpha catalytic subunit (PRKAA1 or PRKAA2), a beta (PRKAB1 or PRKAB2) and a gamma non-catalytic subunits (PRKAG1, PRKAG2 or PRKAG3). Interacts with FNIP1 and FNIP2. Associates with internalized INSR complexes on Golgi/endosomal membranes; PRKAA2/AMPK2 together with ATIC and HACD3/PTPLAD1 is proposed to be part of a signaling network regulating INSR autophosphorylation and endocytosis. Interacts with DUSP29. Interacts with ARF6. The phosphorylated form at Thr-172 mediated by CamKK2 interacts with ACSS2. It depends on Mg(2+) as a cofactor. In terms of processing, ubiquitinated. Post-translationally, phosphorylated at Thr-172 by STK11/LKB1 in complex with STE20-related adapter-alpha (STRADA) pseudo kinase and CAB39. Also phosphorylated at Thr-172 by CAMKK2; triggered by a rise in intracellular calcium ions, without detectable changes in the AMP/ATP ratio. CAMKK1 can also phosphorylate Thr-172, but at much lower level. Dephosphorylated by protein phosphatase 2A and 2C (PP2A and PP2C). Phosphorylated by ULK1; leading to negatively regulate AMPK activity and suggesting the existence of a regulatory feedback loop between ULK1 and AMPK. Dephosphorylated by PPM1A and PPM1B at Thr-172 (mediated by STK11/LKB1). Skeletal muscle, lower levels in liver, heart and kidney.

It is found in the cytoplasm. The protein localises to the nucleus. The catalysed reaction is L-seryl-[protein] + ATP = O-phospho-L-seryl-[protein] + ADP + H(+). It carries out the reaction L-threonyl-[protein] + ATP = O-phospho-L-threonyl-[protein] + ADP + H(+). It catalyses the reaction L-seryl-[acetyl-CoA carboxylase] + ATP = O-phospho-L-seryl-[acetyl-CoA carboxylase] + ADP + H(+). The enzyme catalyses L-seryl-[3-hydroxy-3-methylglutaryl-coenzyme A reductase] + ATP = O-phospho-L-seryl-[3-hydroxy-3-methylglutaryl-coenzyme A reductase] + ADP + H(+). With respect to regulation, activated by phosphorylation on Thr-172. Binding of AMP to non-catalytic gamma subunit (PRKAG1, PRKAG2 or PRKAG3) results in allosteric activation, inducing phosphorylation on Thr-172. AMP-binding to gamma subunit also sustains activity by preventing dephosphorylation of Thr-172. ADP also stimulates Thr-172 phosphorylation, without stimulating already phosphorylated AMPK. ATP promotes dephosphorylation of Thr-172, rendering the enzyme inactive. Under physiological conditions AMPK mainly exists in its inactive form in complex with ATP, which is much more abundant than AMP. Selectively inhibited by compound C (6-[4-(2-Piperidin-1-yl-ethoxy)-phenyl)]-3-pyridin-4-yl-pyyrazolo[1,5-a] pyrimidine. Activated by resveratrol, a natural polyphenol present in red wine, and S17834, a synthetic polyphenol. Salicylate/aspirin directly activates kinase activity, primarily by inhibiting Thr-172 dephosphorylation. Catalytic subunit of AMP-activated protein kinase (AMPK), an energy sensor protein kinase that plays a key role in regulating cellular energy metabolism. In response to reduction of intracellular ATP levels, AMPK activates energy-producing pathways and inhibits energy-consuming processes: inhibits protein, carbohydrate and lipid biosynthesis, as well as cell growth and proliferation. AMPK acts via direct phosphorylation of metabolic enzymes, and by longer-term effects via phosphorylation of transcription regulators. Regulates lipid synthesis by phosphorylating and inactivating lipid metabolic enzymes such as ACACA, ACACB, GYS1, HMGCR and LIPE; regulates fatty acid and cholesterol synthesis by phosphorylating acetyl-CoA carboxylase (ACACA and ACACB) and hormone-sensitive lipase (LIPE) enzymes, respectively. Promotes lipolysis of lipid droplets by mediating phosphorylation of isoform 1 of CHKA (CHKalpha2). Regulates insulin-signaling and glycolysis by phosphorylating IRS1, PFKFB2 and PFKFB3. Involved in insulin receptor/INSR internalization. AMPK stimulates glucose uptake in muscle by increasing the translocation of the glucose transporter SLC2A4/GLUT4 to the plasma membrane, possibly by mediating phosphorylation of TBC1D4/AS160. Regulates transcription and chromatin structure by phosphorylating transcription regulators involved in energy metabolism such as CRTC2/TORC2, FOXO3, histone H2B, HDAC5, MEF2C, MLXIPL/ChREBP, EP300, HNF4A, p53/TP53, SREBF1, SREBF2 and PPARGC1A. Acts as a key regulator of glucose homeostasis in liver by phosphorylating CRTC2/TORC2, leading to CRTC2/TORC2 sequestration in the cytoplasm. In response to stress, phosphorylates 'Ser-36' of histone H2B (H2BS36ph), leading to promote transcription. Acts as a key regulator of cell growth and proliferation by phosphorylating FNIP1, TSC2, RPTOR, WDR24 and ATG1/ULK1: in response to nutrient limitation, negatively regulates the mTORC1 complex by phosphorylating RPTOR component of the mTORC1 complex and by phosphorylating and activating TSC2. Also phosphorylates and inhibits GATOR2 subunit WDR24 in response to nutrient limitation, leading to suppress glucose-mediated mTORC1 activation. In response to energetic stress, phosphorylates FNIP1, inactivating the non-canonical mTORC1 signaling, thereby promoting nuclear translocation of TFEB and TFE3, and inducing transcription of lysosomal or autophagy genes. In response to nutrient limitation, promotes autophagy by phosphorylating and activating ATG1/ULK1. In that process, it also activates WDR45/WIPI4. Phosphorylates CASP6, thereby preventing its autoprocessing and subsequent activation. AMPK also acts as a regulator of circadian rhythm by mediating phosphorylation of CRY1, leading to destabilize it. May regulate the Wnt signaling pathway by phosphorylating CTNNB1, leading to stabilize it. Also acts as a regulator of cellular polarity by remodeling the actin cytoskeleton; probably by indirectly activating myosin. Also phosphorylates CFTR, EEF2K, KLC1, NOS3 and SLC12A1. Plays an important role in the differential regulation of pro-autophagy (composed of PIK3C3, BECN1, PIK3R4 and UVRAG or ATG14) and non-autophagy (composed of PIK3C3, BECN1 and PIK3R4) complexes, in response to glucose starvation. Can inhibit the non-autophagy complex by phosphorylating PIK3C3 and can activate the pro-autophagy complex by phosphorylating BECN1. Upon glucose starvation, promotes ARF6 activation in a kinase-independent manner leading to cell migration. Upon glucose deprivation mediates the phosphorylation of ACSS2 at 'Ser-659', which exposes the nuclear localization signal of ACSS2, required for its interaction with KPNA1 and nuclear translocation. Upon stress, regulates mitochondrial fragmentation through phosphorylation of MTFR1L. The sequence is that of 5'-AMP-activated protein kinase catalytic subunit alpha-2 (Prkaa2) from Rattus norvegicus (Rat).